Reading from the N-terminus, the 131-residue chain is Small ribosomal subunit protein bS6 (131 aa).

Position 93 is an N6-acetyllysine (Lys93). The tract at residues 98–131 is disordered; that stretch reads EASPMVKAKDERRERRDDFANETADDAEAGDSEE. The span at 104-116 shows a compositional bias: basic and acidic residues; it reads KAKDERRERRDDF. The segment covering 120–131 has biased composition (acidic residues); the sequence is TADDAEAGDSEE.

It belongs to the bacterial ribosomal protein bS6 family.

Functionally, binds together with bS18 to 16S ribosomal RNA. This chain is Small ribosomal subunit protein bS6, found in Escherichia fergusonii (strain ATCC 35469 / DSM 13698 / CCUG 18766 / IAM 14443 / JCM 21226 / LMG 7866 / NBRC 102419 / NCTC 12128 / CDC 0568-73).